Consider the following 30-residue polypeptide: Snaclec carinactivase-1 regulatory subunit 14 kDa chain (30 aa).

The C-type lectin domain occupies 1-30 (DCLPDWFHYEGHCYRVFDEPKKWADAEKFC). Cysteines 2 and 13 form a disulfide.

It belongs to the snaclec family. Heterodimer of a metalloproteinase subunit and a regulatory subunit comprising two polypeptides disulfide-linked (14 kDa and 17 kDa chains). As to expression, expressed by the venom gland.

It is found in the secreted. Its function is as follows. Calcium-dependent prothrombin activator. This protein may activate prothrombin via recognition by the regulatory subunit of the calcium ion bound conformation of its gamma-carboxyglutamic acid (GLA) domain, and the subsequent conversion of prothrombin to active thrombin is catalyzed by the catalytic subunit. The chain is Snaclec carinactivase-1 regulatory subunit 14 kDa chain from Echis carinatus (Saw-scaled viper).